Reading from the N-terminus, the 206-residue chain is GTP cyclohydrolase 1 (206 aa).

Residues 1–17 (MDAVTPKKDIPRPDSVR) are compositionally biased toward basic and acidic residues. A disordered region spans residues 1–23 (MDAVTPKKDIPRPDSVRRPSQQE). Zn(2+)-binding residues include cysteine 95, histidine 98, and cysteine 166.

Belongs to the GTP cyclohydrolase I family. In terms of assembly, toroid-shaped homodecamer, composed of two pentamers of five dimers.

The enzyme catalyses GTP + H2O = 7,8-dihydroneopterin 3'-triphosphate + formate + H(+). It participates in cofactor biosynthesis; 7,8-dihydroneopterin triphosphate biosynthesis; 7,8-dihydroneopterin triphosphate from GTP: step 1/1. The protein is GTP cyclohydrolase 1 of Hyphomonas neptunium (strain ATCC 15444).